The following is a 96-amino-acid chain: Tenecin-3 (96 aa).

An N-terminal signal peptide occupies residues M1–P18. Positions D19 to H96 are disordered. A run of 12 repeats spans residues G23–G26, G31–G34, G35–G38, G39–G42, G43–G46, G47–G50, G51–G54, G59–G62, G63–G66, G67–G70, G77–G80, and G86–G89. Positions G23 to G89 are 12 X 4 AA repeats of G-X-X-G. Positions G26–G89 are enriched in gly residues.

The protein to H.diomphalia holotricin 3.

Its subcellular location is the secreted. Its function is as follows. Antifungal heat stable protein produced in response to injury. It is active against C.albicans. No antibacterial activity against Gram-positive and Gram-negative bacteria. This chain is Tenecin-3, found in Tenebrio molitor (Yellow mealworm beetle).